The chain runs to 580 residues: Dihydroxy-acid dehydratase (580 aa).

Residues 1–31 (MPSGSSESPADALRASDSTPDIKPRSRDVTD) form a disordered region. Residues 20–31 (PDIKPRSRDVTD) show a composition bias toward basic and acidic residues. Cysteine 69 lines the [2Fe-2S] cluster pocket. Aspartate 101 is a Mg(2+) binding site. Cysteine 142 serves as a coordination point for [2Fe-2S] cluster. Mg(2+) is bound by residues aspartate 143 and lysine 144. Lysine 144 is subject to N6-carboxylysine. Cysteine 219 serves as a coordination point for [2Fe-2S] cluster. Glutamate 470 contacts Mg(2+). Residue serine 496 is the Proton acceptor of the active site.

It belongs to the IlvD/Edd family. As to quaternary structure, homodimer. Requires [2Fe-2S] cluster as cofactor. Mg(2+) serves as cofactor.

It carries out the reaction (2R)-2,3-dihydroxy-3-methylbutanoate = 3-methyl-2-oxobutanoate + H2O. The catalysed reaction is (2R,3R)-2,3-dihydroxy-3-methylpentanoate = (S)-3-methyl-2-oxopentanoate + H2O. Its pathway is amino-acid biosynthesis; L-isoleucine biosynthesis; L-isoleucine from 2-oxobutanoate: step 3/4. The protein operates within amino-acid biosynthesis; L-valine biosynthesis; L-valine from pyruvate: step 3/4. In terms of biological role, functions in the biosynthesis of branched-chain amino acids. Catalyzes the dehydration of (2R,3R)-2,3-dihydroxy-3-methylpentanoate (2,3-dihydroxy-3-methylvalerate) into 2-oxo-3-methylpentanoate (2-oxo-3-methylvalerate) and of (2R)-2,3-dihydroxy-3-methylbutanoate (2,3-dihydroxyisovalerate) into 2-oxo-3-methylbutanoate (2-oxoisovalerate), the penultimate precursor to L-isoleucine and L-valine, respectively. The sequence is that of Dihydroxy-acid dehydratase from Mycobacterium sp. (strain JLS).